Here is a 353-residue protein sequence, read N- to C-terminus: Protein Wnt-11b-2 (353 aa).

The signal sequence occupies residues 1–22 (MALIRHCVTLLLILCCSRLCGA). N-linked (GlcNAc...) asparagine glycans are attached at residues asparagine 31, asparagine 38, and asparagine 88. 5 cysteine pairs are disulfide-bonded: cysteine 78–cysteine 89, cysteine 128–cysteine 136, cysteine 138–cysteine 155, cysteine 208–cysteine 222, and cysteine 210–cysteine 217. Serine 214 is lipidated: O-palmitoleoyl serine; by PORCN. Sulfotyrosine occurs at positions 274 and 281. 6 disulfides stabilise this stretch: cysteine 282–cysteine 313, cysteine 298–cysteine 308, cysteine 312–cysteine 352, cysteine 328–cysteine 343, cysteine 330–cysteine 340, and cysteine 335–cysteine 336. Asparagine 299 carries N-linked (GlcNAc...) asparagine glycosylation.

It belongs to the Wnt family. In terms of assembly, homodimer. Secreted homodimers form a complex with wnt5a homodimers; tyrosine sulfation of both wnt11 and wnt5a by tpst1 is required for this interaction. Interacts with the transmembrane receptor fzd7/fz7. Interacts with lrp6 and ryk. Interacts with tdgf1/frl1. Interacts weakly with frzb1 and strongly with frzb2/crescent. Interaction with frzb2/crescent antagonizes wnt11 function in the neuroectoderm, but enhances it in mesodermal tissue. In terms of processing, glycosylation is required for protein secretion. Palmitoleoylation is required for efficient binding to frizzled receptors. Depalmitoleoylation leads to Wnt signaling pathway inhibition.

The protein localises to the secreted. Its subcellular location is the extracellular space. It is found in the extracellular matrix. Its function is as follows. Ligand for the frizzled7 transmembrane receptor. Primarily acts via non-canonical Wnt pathways mediated by either Ca(2+) and PKC, or by JNK and dvl2/dsh. Depending on the cellular context, can also signal via the canonical Wnt pathway mediated by beta-catenin and dvl2/dsh. May also inhibit canonical Wnt signaling. Maternally initiates dorsal/ventral axis formation by a canonical route, which signals via lrp6. In a complex with wnt5a, activates the canonical and non-canonical processes involved in axis formation. In the non-canonical pathway, acts through fzd7/fz7 to induce phosphorylation of dvl2/dsh. Signals through a non-canonical Wnt pathway to regulate convergent extension movements during gastrulation. Interactions with the secreted Wnt antagonist sfrp5 to coordinate foregut development, acting via a non-canonical wnt pathway whereby sfrp5 restricts wnt11b activity to prevent inappropriate foregut formation. Mediates cardiogenesis via non-canonical Wnt signaling involving JNK-activation and PKC. Acts redundantly with wnt11/wnt11r during pronephros induction. The protein is Protein Wnt-11b-2 of Xenopus tropicalis (Western clawed frog).